Reading from the N-terminus, the 653-residue chain is Serine/threonine-protein phosphatase with EF-hands 1 (653 aa).

One can recognise an IQ domain in the interval 16–45; the sequence is SLRAALIIQNWYRGYKARLKARQHYALTIF. Positions 121–455 are catalytic; the sequence is IDLLLEAFKE…PRFFQYQVTK (335 aa). Residues Asp172, His174, Asp201, and Asn233 each coordinate Mn(2+). His234 acts as the Proton donor in catalysis. The Mn(2+) site is built by His285 and His403. EF-hand domains lie at 483–518, 566–601, and 606–641; these read SRKS…ILGL, RYRS…FSSH, and IDDS…VHRY. Ca(2+)-binding residues include Asp579, Asp581, Ser583, Glu590, Asp619, Asn621, Asp623, Ser625, and Glu630.

This sequence belongs to the PPP phosphatase family. Mn(2+) serves as cofactor. Mg(2+) is required as a cofactor. Detected in retina and retinal derived Y-79 retinoblastoma cells. Also found in fetal brain.

The enzyme catalyses O-phospho-L-seryl-[protein] + H2O = L-seryl-[protein] + phosphate. It carries out the reaction O-phospho-L-threonyl-[protein] + H2O = L-threonyl-[protein] + phosphate. Activated by calcium. In terms of biological role, may have a role in the recovery or adaptation response of photoreceptors. May have a role in development. The chain is Serine/threonine-protein phosphatase with EF-hands 1 (PPEF1) from Homo sapiens (Human).